The following is a 423-amino-acid chain: Serine--tRNA ligase (423 aa).

231–233 (TAE) serves as a coordination point for L-serine. Position 262 to 264 (262 to 264 (RSE)) interacts with ATP. Glutamate 285 is an L-serine binding site. 349-352 (EISS) is a binding site for ATP. Serine 384 provides a ligand contact to L-serine.

The protein belongs to the class-II aminoacyl-tRNA synthetase family. Type-1 seryl-tRNA synthetase subfamily. In terms of assembly, homodimer. The tRNA molecule binds across the dimer.

The protein localises to the cytoplasm. The catalysed reaction is tRNA(Ser) + L-serine + ATP = L-seryl-tRNA(Ser) + AMP + diphosphate + H(+). It catalyses the reaction tRNA(Sec) + L-serine + ATP = L-seryl-tRNA(Sec) + AMP + diphosphate + H(+). It functions in the pathway aminoacyl-tRNA biosynthesis; selenocysteinyl-tRNA(Sec) biosynthesis; L-seryl-tRNA(Sec) from L-serine and tRNA(Sec): step 1/1. Functionally, catalyzes the attachment of serine to tRNA(Ser). Is also able to aminoacylate tRNA(Sec) with serine, to form the misacylated tRNA L-seryl-tRNA(Sec), which will be further converted into selenocysteinyl-tRNA(Sec). The polypeptide is Serine--tRNA ligase (Acinetobacter baylyi (strain ATCC 33305 / BD413 / ADP1)).